The sequence spans 309 residues: Homoserine kinase (309 aa).

Residue 91–101 coordinates ATP; sequence PIGSGLGSSAC.

It belongs to the GHMP kinase family. Homoserine kinase subfamily.

It is found in the cytoplasm. The enzyme catalyses L-homoserine + ATP = O-phospho-L-homoserine + ADP + H(+). The protein operates within amino-acid biosynthesis; L-threonine biosynthesis; L-threonine from L-aspartate: step 4/5. Catalyzes the ATP-dependent phosphorylation of L-homoserine to L-homoserine phosphate. The protein is Homoserine kinase of Salmonella arizonae (strain ATCC BAA-731 / CDC346-86 / RSK2980).